The chain runs to 189 residues: Ras-like protein 1 (189 aa).

10–17 (GAGGVGKS) serves as a coordination point for GTP. An Effector region motif is present at residues 32 to 40 (YDPTIEDSY). GTP-binding positions include 57–61 (DTAGQ) and 116–119 (NKCD). Cysteine 186 carries the cysteine methyl ester modification. Residue cysteine 186 is the site of S-geranylgeranyl cysteine attachment. The propeptide at 187 to 189 (KML) is removed in mature form.

Belongs to the small GTPase superfamily. Ras family.

It localises to the cell membrane. The catalysed reaction is GTP + H2O = GDP + phosphate + H(+). Its activity is regulated as follows. Alternates between an inactive form bound to GDP and an active form bound to GTP. Activated by a guanine nucleotide-exchange factor (GEF) and inactivated by a GTPase-activating protein (GAP). Ras proteins bind GDP/GTP and possess intrinsic GTPase activity. Plays a role in eye development by regulating cell growth, survival of postmitotic ommatidial cells and differentiation of photoreceptor cells. During larval development, mediates Ptth/tor signaling leading to the production of ecdysone, a hormone required for the initiation of metamorphosis. The chain is Ras-like protein 1 from Drosophila willistoni (Fruit fly).